The chain runs to 475 residues: MASFGMNWNQKSPVFWDWENPAPFGPNTMENPKSIPHPEPRGVVVAAANHGSTNSSGGTFTSSSELANGSSKSSLSASFDSSSKLGNSLEFRFASVKGHGKNMCKDGEAGRVEDSGTSPAVAVSHGEPVIGLKLGKRTYFENVCGGQNVKSSSAASGVTCPSTVVKKMKVSQQSTQSSYCQVEGCKVDLSSAREYHRKHKVCEAHSKAPKVIVSGLERRFCQQCSRFHGLAEFDQKKKSCRRRLSDHNARRRKPQQEAISFGSSRLATMFYDARQQTDIYFGQSPFGQVRSNAISSCDNLGGFKFTEAKLPWMKPMKTIGLEDLNFSTLQMPGNVVSHTVHHHDFDGLIPFKGNTTKVLNQGVDPACAVVSSNSNGAPDLRRALSLLSSDSWGPADVQAGSQVHPGGVMPPLAVAAATVTAPTNPVSVMHALHPSTGGGGFWQDGDDPPPLDHASQAQAFMHPGNGSSSGYGHLH.

Residues 49-73 (NHGSTNSSGGTFTSSSELANGSSKS) form a disordered region. Positions 51–73 (GSTNSSGGTFTSSSELANGSSKS) are enriched in low complexity. An SBP-type zinc finger spans residues 177 to 254 (SSYCQVEGCK…SDHNARRRKP (78 aa)). Residues cysteine 180, cysteine 185, cysteine 202, histidine 205, cysteine 221, cysteine 224, histidine 228, and cysteine 240 each coordinate Zn(2+). Residues 237 to 253 (KKSCRRRLSDHNARRRK) carry the Bipartite nuclear localization signal motif. Residues 437-475 (GGGGFWQDGDDPPPLDHASQAQAFMHPGNGSSSGYGHLH) form a disordered region. Polar residues predominate over residues 465 to 475 (NGSSSGYGHLH).

In terms of tissue distribution, expressed in young panicles.

Its subcellular location is the nucleus. Functionally, trans-acting factor that binds specifically to the consensus nucleotide sequence 5'-TNCGTACAA-3'. May be involved in panicle development. The protein is Squamosa promoter-binding-like protein 12 (SPL12) of Oryza sativa subsp. indica (Rice).